The following is a 175-amino-acid chain: Crossover junction endodeoxyribonuclease RuvC (175 aa).

Residues D7, E68, and D141 contribute to the active site. Mg(2+)-binding residues include D7, E68, and D141.

The protein belongs to the RuvC family. In terms of assembly, homodimer which binds Holliday junction (HJ) DNA. The HJ becomes 2-fold symmetrical on binding to RuvC with unstacked arms; it has a different conformation from HJ DNA in complex with RuvA. In the full resolvosome a probable DNA-RuvA(4)-RuvB(12)-RuvC(2) complex forms which resolves the HJ. It depends on Mg(2+) as a cofactor.

The protein resides in the cytoplasm. It catalyses the reaction Endonucleolytic cleavage at a junction such as a reciprocal single-stranded crossover between two homologous DNA duplexes (Holliday junction).. Functionally, the RuvA-RuvB-RuvC complex processes Holliday junction (HJ) DNA during genetic recombination and DNA repair. Endonuclease that resolves HJ intermediates. Cleaves cruciform DNA by making single-stranded nicks across the HJ at symmetrical positions within the homologous arms, yielding a 5'-phosphate and a 3'-hydroxyl group; requires a central core of homology in the junction. The consensus cleavage sequence is 5'-(A/T)TT(C/G)-3'. Cleavage occurs on the 3'-side of the TT dinucleotide at the point of strand exchange. HJ branch migration catalyzed by RuvA-RuvB allows RuvC to scan DNA until it finds its consensus sequence, where it cleaves and resolves the cruciform DNA. This Salinispora arenicola (strain CNS-205) protein is Crossover junction endodeoxyribonuclease RuvC.